Reading from the N-terminus, the 315-residue chain is 4-diphosphocytidyl-2-C-methyl-D-erythritol kinase (315 aa).

Lys11 is an active-site residue. 99–109 (PMAAGLAGGSA) lines the ATP pocket. The active site involves Asp141.

This sequence belongs to the GHMP kinase family. IspE subfamily.

It carries out the reaction 4-CDP-2-C-methyl-D-erythritol + ATP = 4-CDP-2-C-methyl-D-erythritol 2-phosphate + ADP + H(+). Its pathway is isoprenoid biosynthesis; isopentenyl diphosphate biosynthesis via DXP pathway; isopentenyl diphosphate from 1-deoxy-D-xylulose 5-phosphate: step 3/6. In terms of biological role, catalyzes the phosphorylation of the position 2 hydroxy group of 4-diphosphocytidyl-2C-methyl-D-erythritol. The sequence is that of 4-diphosphocytidyl-2-C-methyl-D-erythritol kinase from Synechocystis sp. (strain ATCC 27184 / PCC 6803 / Kazusa).